The primary structure comprises 690 residues: Tripartite terminase subunit 3 (690 aa).

The short motif at 226–233 (IPRRHGKT) is the Walker A motif element. A Walker B motif motif is present at residues 321-326 (LLFVDE). Glu-326 (for ATPase activity) is an active-site residue. Residues Asp-481, Glu-555, and Asp-667 each act as for nuclease activity in the active site.

Belongs to the herpesviridae TRM3 protein family. Interacts with the terminase subunits TRM1 and TRM2. Interacts with portal protein.

Its subcellular location is the host nucleus. Its function is as follows. Component of the molecular motor that translocates viral genomic DNA in empty capsid during DNA packaging. Forms a tripartite terminase complex together with TRM1 and TRM2 in the host cytoplasm. Once the complex reaches the host nucleus, it interacts with the capsid portal vertex. This portal forms a ring in which genomic DNA is translocated into the capsid. TRM3 carries an RNase H-like nuclease activity that plays an important role for the cleavage of concatemeric viral DNA into unit length genomes. This chain is Tripartite terminase subunit 3, found in Homo sapiens (Human).